Consider the following 426-residue polypeptide: MKDLIQELKNRKLISKLTDEINIKKILKEKKINLYCGFDPTADSLHIGHLIPLLFLKRFSNFGHIPIIVIGGATALLGDFNIKKNKSFLEKYKNVKNWSKTIENQILNIIKYENNNCNLIILNNYLWIKELKIINFLRDIGRFISINKILRKEIVKKKLKENQHISFMEFSYSLLQGYDYYFLNLNYDVYIQIGGSDQWSNIISGIDLVNKINKKKVYGITTPLLTRSNGSKLGKSDDKEKVIWLDKKKTSVYEFYQFWLNTPDEKIFRYLKLFTFISMSEINKLKCKFFNKEINPFQAQKILADEITKIVHGISQLRLAQKATNFLFYKKISELSIEDFYLLSTSGIKIYYPKSNENIKDILVNSKLSKSKNNAKSVILSSSIRINNKKQKSIDFMFKKEDKLFNLFTLIKKGKKDFCLLIWKNY.

Tyr-35 provides a ligand contact to L-tyrosine. The short motif at 40 to 49 is the 'HIGH' region element; sequence PTADSLHIGH. L-tyrosine-binding residues include Tyr-172 and Gln-176. A 'KMSKS' region motif is present at residues 232-236; the sequence is KLGKS. Lys-235 is an ATP binding site. In terms of domain architecture, S4 RNA-binding spans 357–414; it reads ENIKDILVNSKLSKSKNNAKSVILSSSIRINNKKQKSIDFMFKKEDKLFNLFTLIKKG.

It belongs to the class-I aminoacyl-tRNA synthetase family. TyrS type 1 subfamily. In terms of assembly, homodimer.

The protein resides in the cytoplasm. The enzyme catalyses tRNA(Tyr) + L-tyrosine + ATP = L-tyrosyl-tRNA(Tyr) + AMP + diphosphate + H(+). Its function is as follows. Catalyzes the attachment of tyrosine to tRNA(Tyr) in a two-step reaction: tyrosine is first activated by ATP to form Tyr-AMP and then transferred to the acceptor end of tRNA(Tyr). The protein is Tyrosine--tRNA ligase of Wigglesworthia glossinidia brevipalpis.